The primary structure comprises 181 residues: MICGIDEVGRGCIFGPVLSAAVVFKKKPNFIKELDDSKKLKKEKREYLSSLILENSYYAFAEISNIIIEKINIHNATLLAMQTAYENLKLNCSLVFVDGKFVPKITAKTVKAIIKGDSIIDEIKAASIIAKVKRDKLMDEYDKIYPLYLLRKNKGYPTKEHKNAIKKYGVLSLHRRNFKLI.

The region spanning 1–181 is the RNase H type-2 domain; that stretch reads MICGIDEVGR…SLHRRNFKLI (181 aa). 3 residues coordinate a divalent metal cation: aspartate 6, glutamate 7, and aspartate 98.

This sequence belongs to the RNase HII family. Requires Mn(2+) as cofactor. It depends on Mg(2+) as a cofactor.

It is found in the cytoplasm. The enzyme catalyses Endonucleolytic cleavage to 5'-phosphomonoester.. In terms of biological role, endonuclease that specifically degrades the RNA of RNA-DNA hybrids. The sequence is that of Ribonuclease HII from Borrelia garinii subsp. bavariensis (strain ATCC BAA-2496 / DSM 23469 / PBi) (Borreliella bavariensis).